A 104-amino-acid chain; its full sequence is Large ribosomal subunit protein eL30 (104 aa).

Belongs to the eukaryotic ribosomal protein eL30 family.

The chain is Large ribosomal subunit protein eL30 (RPL30) from Tetrahymena thermophila (strain SB210).